Reading from the N-terminus, the 148-residue chain is MNIVPQDTFKSQVSTDQDKSVLSSAVPSLPDTLRQQEGGAVPLSTQLNDRHPLESTLKNWETTQRQRQMEQYRQIFGIAEPMKRTMEMEIVNRTDFNPLSTNGSIHRDILLNKECSIDWEDVYPGTGLQASTMVGDDVHSKIEKQLGI.

The segment at 1–35 is disordered; sequence MNIVPQDTFKSQVSTDQDKSVLSSAVPSLPDTLRQ. The segment covering 8 to 26 has biased composition (polar residues); sequence TFKSQVSTDQDKSVLSSAV.

Belongs to the POMP/UMP1 family. In terms of processing, seems to be degraded by the proteasome upon its formation.

Its function is as follows. Short-lived chaperone present in the precursor form of the 20S proteasome and absent in the mature complex. Required for the correct assembly and enzymatic activation of the proteasome. Also prevents premature processing of the PRE2 propeptide. The chain is Proteasome maturation factor UMP1 (UMP1) from Saccharomyces cerevisiae (strain ATCC 204508 / S288c) (Baker's yeast).